Reading from the N-terminus, the 98-residue chain is UPF0213 protein BPUM_0019 (98 aa).

A GIY-YIG domain is found at 4-79 (HNHYFYVLKC…KTWTRKKKDL (76 aa)).

The protein belongs to the UPF0213 family.

The protein is UPF0213 protein BPUM_0019 of Bacillus pumilus (strain SAFR-032).